Here is a 388-residue protein sequence, read N- to C-terminus: Peptide chain release factor subunit 1 (388 aa).

Belongs to the eukaryotic release factor 1 family. As to quaternary structure, heterodimer of two subunits, one of which binds GTP.

The protein resides in the cytoplasm. Its function is as follows. Directs the termination of nascent peptide synthesis (translation) in response to the termination codons UAA, UAG and UGA. This chain is Peptide chain release factor subunit 1 (prf1), found in Pyrobaculum aerophilum (strain ATCC 51768 / DSM 7523 / JCM 9630 / CIP 104966 / NBRC 100827 / IM2).